Here is a 189-residue protein sequence, read N- to C-terminus: Thymidine kinase (189 aa).

Residues 9–16 (GTMNSGKT) and 85–88 (DESQ) contribute to the ATP site. Glutamate 86 functions as the Proton acceptor in the catalytic mechanism. The Zn(2+) site is built by cysteine 143, cysteine 146, cysteine 180, and histidine 183.

This sequence belongs to the thymidine kinase family. In terms of assembly, homotetramer.

The protein resides in the cytoplasm. The catalysed reaction is thymidine + ATP = dTMP + ADP + H(+). This is Thymidine kinase from Streptococcus pyogenes serotype M3 (strain ATCC BAA-595 / MGAS315).